We begin with the raw amino-acid sequence, 482 residues long: UDP-glycosyltransferase 86A2 (482 aa).

Residues Ser297, 355 to 357 (CCQ), 372 to 380 (HCGWNSILE), and 394 to 397 (LTDQ) contribute to the UDP-alpha-D-glucose site.

The protein belongs to the UDP-glycosyltransferase family.

This is UDP-glycosyltransferase 86A2 (UGT86A2) from Arabidopsis thaliana (Mouse-ear cress).